A 262-amino-acid chain; its full sequence is Glycine and serine-rich protein 1 (262 aa).

The signal sequence occupies residues 1–21 (MVIKTSLTVLILGVLIAEVFC). N-linked (GlcNAc...) asparagine glycosylation is present at N59. The interval 172–212 (SNGGWGAETGSSGGMNSQSSGSQSGSWGSSSGSWGGSSGSM) is disordered. A compositionally biased stretch (gly residues) spans 174 to 184 (GGWGAETGSSG). The span at 185–203 (GMNSQSSGSQSGSWGSSSG) shows a compositional bias: low complexity.

Component of the acid-insoluble and acid-soluble organic matrix of calcified layers of the shell (at protein level).

It localises to the secreted. The protein is Glycine and serine-rich protein 1 of Lottia gigantea (Giant owl limpet).